We begin with the raw amino-acid sequence, 557 residues long: Syntaxin-binding protein 4 (557 aa).

Phosphoserine occurs at positions 10 and 12. Residues 19–105 form the PDZ domain; that stretch reads AFRVITVTKE…RSESPWEIAF (87 aa). Ser99 bears the Phosphoserine; by PKB/AKT2 mark. Positions 142–154 are enriched in low complexity; sequence PSETLLPKTSSTP. Residues 142-214 form a disordered region; it reads PSETLLPKTS…SGPQGKISLN (73 aa). Residues 179–194 show a composition bias toward polar residues; that stretch reads SPITSLDNSPADTSNA. Ser216 is subject to Phosphoserine. Positions 298–408 form a coiled coil; sequence ADEVGKLRQE…NKESVQDLRK (111 aa). Ser467 is modified (phosphoserine). A WW domain is found at 500–533; it reads DCLPYGWEEAYTADGIKYFINHVTQTTSWIHPVM.

Interacts with STX4A. In terms of processing, phosphorylated on Ser-99 by PKB/AKT2 after insulin treatment. Phosphorylation on Ser-99 abolishes the interaction with STX4A. In terms of tissue distribution, detected in skeletal muscle, heart, testis, adipocytes and pancreatic islet cells.

The protein resides in the cytoplasm. Functionally, plays a role in the translocation of transport vesicles from the cytoplasm to the plasma membrane. Inhibits the translocation of SLC2A4 from intracellular vesicles to the plasma membrane by STX4A binding and preventing the interaction between STX4A and VAMP2. Stimulation with insulin disrupts the interaction with STX4A, leading to increased levels of SLC2A4 at the plasma membrane. May also play a role in the regulation of insulin release by pancreatic beta cells after stimulation by glucose. In Mus musculus (Mouse), this protein is Syntaxin-binding protein 4 (Stxbp4).